The sequence spans 477 residues: Aspartyl/glutamyl-tRNA(Asn/Gln) amidotransferase subunit B (477 aa).

The protein belongs to the GatB/GatE family. GatB subfamily. As to quaternary structure, heterotrimer of A, B and C subunits.

It catalyses the reaction L-glutamyl-tRNA(Gln) + L-glutamine + ATP + H2O = L-glutaminyl-tRNA(Gln) + L-glutamate + ADP + phosphate + H(+). The enzyme catalyses L-aspartyl-tRNA(Asn) + L-glutamine + ATP + H2O = L-asparaginyl-tRNA(Asn) + L-glutamate + ADP + phosphate + 2 H(+). Its function is as follows. Allows the formation of correctly charged Asn-tRNA(Asn) or Gln-tRNA(Gln) through the transamidation of misacylated Asp-tRNA(Asn) or Glu-tRNA(Gln) in organisms which lack either or both of asparaginyl-tRNA or glutaminyl-tRNA synthetases. The reaction takes place in the presence of glutamine and ATP through an activated phospho-Asp-tRNA(Asn) or phospho-Glu-tRNA(Gln). The polypeptide is Aspartyl/glutamyl-tRNA(Asn/Gln) amidotransferase subunit B (Methylobacillus flagellatus (strain ATCC 51484 / DSM 6875 / VKM B-1610 / KT)).